A 261-amino-acid chain; its full sequence is Ribosome-inactivating protein PD-L1/PD-L2 (261 aa).

N-linked (GlcNAc...) asparagine; in PD-L1 and PD-L2 glycosylation is found at asparagine 10 and asparagine 43. 2 cysteine pairs are disulfide-bonded: cysteine 34–cysteine 258 and cysteine 84–cysteine 105. Tyrosine 72 is a catalytic residue. Valine 73 serves as a coordination point for substrate. Serine 120 contacts substrate. Active-site residues include tyrosine 122, glutamate 175, and arginine 178. Arginine 178 is a substrate binding site. Residue asparagine 255 is glycosylated (N-linked (GlcNAc...) asparagine; in PD-L1).

This sequence belongs to the ribosome-inactivating protein family. Type 1 RIP subfamily. N-glycosylated. Loss of glycosylation does not affect DNA-cleaving ability. Loss of glycosylation does not affect protein synthesis inhibition, but increases adenine polynucleotide glycosidase activity likely as a consequence of the increased accessibility of substrates to the active site pocket in the absence of glycosylation. As to expression, expressed in leaves (at protein level).

The enzyme catalyses Endohydrolysis of the N-glycosidic bond at one specific adenosine on the 28S rRNA.. In terms of biological role, inhibits protein synthesis. Has adenine polynucleotide glycosidase activity on herring sperm (hs)DNA and poly(A) substrates. Cleaves supercoiled pBR322 dsDNA. The protein is Ribosome-inactivating protein PD-L1/PD-L2 of Phytolacca dioica (Bella sombra tree).